The following is a 161-amino-acid chain: Phosphopantetheine adenylyltransferase (161 aa).

A substrate-binding site is contributed by T10. ATP-binding positions include 10–11 and H18; that span reads TF. The substrate site is built by K42, L74, and R88. Residues 89–91, E99, and 124–130 contribute to the ATP site; these read GLR and NSFISST.

This sequence belongs to the bacterial CoaD family. As to quaternary structure, homohexamer. Mg(2+) serves as cofactor.

It localises to the cytoplasm. It carries out the reaction (R)-4'-phosphopantetheine + ATP + H(+) = 3'-dephospho-CoA + diphosphate. It functions in the pathway cofactor biosynthesis; coenzyme A biosynthesis; CoA from (R)-pantothenate: step 4/5. Reversibly transfers an adenylyl group from ATP to 4'-phosphopantetheine, yielding dephospho-CoA (dPCoA) and pyrophosphate. The protein is Phosphopantetheine adenylyltransferase of Photobacterium profundum (strain SS9).